Here is a 245-residue protein sequence, read N- to C-terminus: Thymidylate kinase (245 aa).

55-62 (GIDGVGKS) contributes to the ATP binding site.

Belongs to the thymidylate kinase family.

It carries out the reaction dTMP + ATP = dTDP + ADP. Phosphorylation of dTMP to form dTDP in both de novo and salvage pathways of dTTP synthesis. The protein is Thymidylate kinase of Rhodopirellula baltica (strain DSM 10527 / NCIMB 13988 / SH1).